The following is a 472-amino-acid chain: Gamma-aminobutyric acid receptor subunit beta-2 (472 aa).

A signal peptide spans 1 to 23 (RVRKKDYFGIWSFPLIIAAVCAQ). Topologically, residues 24-239 (SVNDPSNMSL…LSLSFKLKRN (216 aa)) are extracellular. 2 N-linked (GlcNAc...) asparagine glycosylation sites follow: asparagine 30 and asparagine 102. Residue tyrosine 119 coordinates histamine. Cysteine 158 and cysteine 172 are joined by a disulfide. Histamine-binding positions include 178 to 179 (SY) and threonine 224. 4-aminobutanoate contacts are provided by tyrosine 179 and threonine 224. Transmembrane regions (helical) follow at residues 240-260 (IGYFILQTYMPSILITILSWV), 271-290 (ARVALGITTVLTMTTINTHL), and 309-329 (GCFVFVFMALLEYALVNYIFF). Residues 287 to 308 (NTHLRETLPKIPYVKAIDMYLM) are etomidate binding; allosteric effector. The Cytoplasmic portion of the chain corresponds to 330–450 (GRGPQRQKKA…LTDVNAIDRW (121 aa)). The residue at position 401 (tyrosine 401) is a Phosphotyrosine. Residues 451-471 (SRIFFPVVFSFFNIVYWLYYV) form a helical membrane-spanning segment.

This sequence belongs to the ligand-gated ion channel (TC 1.A.9) family. Gamma-aminobutyric acid receptor (TC 1.A.9.5) subfamily. GABRB2 sub-subfamily. Heteropentamer, formed by a combination of alpha (GABRA1-6), beta (GABRB1-3), gamma (GABRG1-3), delta (GABRD), epsilon (GABRE), rho (GABRR1-3), pi (GABRP) and theta (GABRQ) chains, each subunit exhibiting distinct physiological and pharmacological properties. Interacts with UBQLN1. May interact with KIF21B. Identified in a complex of 720 kDa composed of LHFPL4, NLGN2, GABRA1, GABRB2, GABRG2 and GABRB3. Glycosylated.

The protein localises to the postsynaptic cell membrane. It is found in the cell membrane. It localises to the cytoplasmic vesicle membrane. The enzyme catalyses chloride(in) = chloride(out). Its activity is regulated as follows. Allosterically activated by benzodiazepines. Allosterically activated by the anesthetic etomidate. Inhibited by the antagonist bicuculline. Potentiated by histamine. Functionally, beta subunit of the heteropentameric ligand-gated chloride channel gated by gamma-aminobutyric acid (GABA), a major inhibitory neurotransmitter in the brain. GABA-gated chloride channels, also named GABA(A) receptors (GABAAR), consist of five subunits arranged around a central pore and contain GABA active binding site(s) located at the alpha and beta subunit interface(s). When activated by GABA, GABAARs selectively allow the flow of chloride anions across the cell membrane down their electrochemical gradient. Chloride influx into the postsynaptic neuron following GABAAR opening decreases the neuron ability to generate a new action potential, thereby reducing nerve transmission. GABAARs containing alpha-1 and beta-2 or -3 subunits exhibit synaptogenic activity; the gamma-2 subunit being necessary but not sufficient to induce rapid synaptic contacts formation. Extrasynaptic beta-2 receptors contribute to the tonic GABAergic inhibition. Beta-containing GABAARs can simultaneously bind GABA and histamine where histamine binds at the interface of two neighboring beta subunits, which may be involved in the regulation of sleep and wakefulness. The chain is Gamma-aminobutyric acid receptor subunit beta-2 (GABRB2) from Bos taurus (Bovine).